Here is a 619-residue protein sequence, read N- to C-terminus: Dihydroxy-acid dehydratase (619 aa).

Asp81 contributes to the Mg(2+) binding site. Position 122 (Cys122) interacts with [2Fe-2S] cluster. Mg(2+) is bound by residues Asp123 and Lys124. Lys124 bears the N6-carboxylysine mark. A [2Fe-2S] cluster-binding site is contributed by Cys195. Glu494 is a binding site for Mg(2+). The active-site Proton acceptor is Ser520.

This sequence belongs to the IlvD/Edd family. As to quaternary structure, homodimer. [2Fe-2S] cluster serves as cofactor. It depends on Mg(2+) as a cofactor.

The catalysed reaction is (2R)-2,3-dihydroxy-3-methylbutanoate = 3-methyl-2-oxobutanoate + H2O. It catalyses the reaction (2R,3R)-2,3-dihydroxy-3-methylpentanoate = (S)-3-methyl-2-oxopentanoate + H2O. It functions in the pathway amino-acid biosynthesis; L-isoleucine biosynthesis; L-isoleucine from 2-oxobutanoate: step 3/4. The protein operates within amino-acid biosynthesis; L-valine biosynthesis; L-valine from pyruvate: step 3/4. In terms of biological role, functions in the biosynthesis of branched-chain amino acids. Catalyzes the dehydration of (2R,3R)-2,3-dihydroxy-3-methylpentanoate (2,3-dihydroxy-3-methylvalerate) into 2-oxo-3-methylpentanoate (2-oxo-3-methylvalerate) and of (2R)-2,3-dihydroxy-3-methylbutanoate (2,3-dihydroxyisovalerate) into 2-oxo-3-methylbutanoate (2-oxoisovalerate), the penultimate precursor to L-isoleucine and L-valine, respectively. The chain is Dihydroxy-acid dehydratase from Shewanella sp. (strain MR-7).